The chain runs to 489 residues: Glycogen synthase (489 aa).

Residue Lys15 coordinates ADP-alpha-D-glucose.

Belongs to the glycosyltransferase 1 family. Bacterial/plant glycogen synthase subfamily.

The catalysed reaction is [(1-&gt;4)-alpha-D-glucosyl](n) + ADP-alpha-D-glucose = [(1-&gt;4)-alpha-D-glucosyl](n+1) + ADP + H(+). Its pathway is glycan biosynthesis; glycogen biosynthesis. Its function is as follows. Synthesizes alpha-1,4-glucan chains using ADP-glucose. The polypeptide is Glycogen synthase (Francisella tularensis subsp. holarctica (strain FTNF002-00 / FTA)).